The chain runs to 210 residues: Probable GTP-binding protein EngB (210 aa).

In terms of domain architecture, EngB-type G spans 30–204 (QGYEVAFAGR…YRVLADWMEL (175 aa)). Residues 38–45 (GRSNAGKS), 64–68 (GRTQL), 82–85 (DLPG), 149–152 (TKAD), and 182–185 (LFSA) contribute to the GTP site. Mg(2+) is bound by residues Ser45 and Thr66.

This sequence belongs to the TRAFAC class TrmE-Era-EngA-EngB-Septin-like GTPase superfamily. EngB GTPase family. The cofactor is Mg(2+).

Its function is as follows. Necessary for normal cell division and for the maintenance of normal septation. This is Probable GTP-binding protein EngB from Pseudomonas entomophila (strain L48).